The following is a 449-amino-acid chain: Kynurenine 3-monooxygenase (449 aa).

The protein belongs to the aromatic-ring hydroxylase family. KMO subfamily. It depends on FAD as a cofactor.

The catalysed reaction is L-kynurenine + NADPH + O2 + H(+) = 3-hydroxy-L-kynurenine + NADP(+) + H2O. The protein operates within cofactor biosynthesis; NAD(+) biosynthesis; quinolinate from L-kynurenine: step 1/3. In terms of biological role, catalyzes the hydroxylation of L-kynurenine (L-Kyn) to form 3-hydroxy-L-kynurenine (L-3OHKyn). Required for synthesis of quinolinic acid. This is Kynurenine 3-monooxygenase from Cytophaga hutchinsonii (strain ATCC 33406 / DSM 1761 / CIP 103989 / NBRC 15051 / NCIMB 9469 / D465).